A 1012-amino-acid chain; its full sequence is RAS protein activator like-3 (1012 aa).

Disordered stretches follow at residues 1–128 (MDPP…TPDV), 147–196 (GNED…QIHN), and 208–229 (KKAK…ALGS). Residues 7 to 21 (SRASQTQPVAPSPLT) are compositionally biased toward polar residues. Ser18 carries the post-translational modification Phosphoserine. Gly residues predominate over residues 27 to 39 (SGGGAEKGAGGFR). Positions 50–62 (QSHQETTASSQPA) are enriched in polar residues. Ser51 carries the post-translational modification Phosphoserine. A compositionally biased stretch (acidic residues) spans 100 to 113 (SEPEPENPEPEPEL). Residues Ser160, Ser162, Ser163, and Ser166 each carry the phosphoserine modification. The segment covering 160–171 (SASSESSIHVAS) has biased composition (low complexity). Residues 175 to 186 (KDPDRTPGKTDP) show a composition bias toward basic and acidic residues. The PH domain maps to 193 to 294 (QIHNVRGLLK…WIEDLRRHFQ (102 aa)). Phosphoserine is present on residues Ser212, Ser225, Ser229, and Ser232. The residue at position 235 (Thr235) is a Phosphothreonine. The C2 domain maps to 285–405 (WIEDLRRHFQ…APAAGLERWF (121 aa)). The 209-residue stretch at 475–683 (GRAQALVTDL…PAMQHFLDQV (209 aa)) folds into the Ras-GAP domain. A disordered region spans residues 752–887 (PAPRTQGHSS…DKDQALGTHR (136 aa)). 2 positions are modified to phosphoserine: Ser788 and Ser791. Residues 826–841 (PARRRPSAGPRPRPKG) are compositionally biased toward basic residues. Residues 889 to 989 (VGKLAELQCE…KDTIQNLQLL (101 aa)) adopt a coiled-coil conformation. The span at 990-999 (PRTSESQSQP) shows a compositional bias: polar residues. The disordered stretch occupies residues 990–1012 (PRTSESQSQPVPLKAPCINGDTT).

The protein localises to the cytoplasm. Its subcellular location is the cell cortex. Functions as a Ras GTPase-activating protein. Plays an important role in the expansion and functions of natural killer T (NKT) cells in the liver by negatively regulating RAS activity and the down-stream ERK signaling pathway. In Bos taurus (Bovine), this protein is RAS protein activator like-3 (RASAL3).